Here is a 311-residue protein sequence, read N- to C-terminus: tRNA-cytidine(32) 2-sulfurtransferase (311 aa).

Positions 45 to 50 (SGGKDS) match the PP-loop motif motif. Positions 120, 123, and 211 each coordinate [4Fe-4S] cluster.

Belongs to the TtcA family. As to quaternary structure, homodimer. The cofactor is Mg(2+). It depends on [4Fe-4S] cluster as a cofactor.

Its subcellular location is the cytoplasm. The catalysed reaction is cytidine(32) in tRNA + S-sulfanyl-L-cysteinyl-[cysteine desulfurase] + AH2 + ATP = 2-thiocytidine(32) in tRNA + L-cysteinyl-[cysteine desulfurase] + A + AMP + diphosphate + H(+). The protein operates within tRNA modification. Functionally, catalyzes the ATP-dependent 2-thiolation of cytidine in position 32 of tRNA, to form 2-thiocytidine (s(2)C32). The sulfur atoms are provided by the cysteine/cysteine desulfurase (IscS) system. This Shewanella halifaxensis (strain HAW-EB4) protein is tRNA-cytidine(32) 2-sulfurtransferase.